A 1351-amino-acid polypeptide reads, in one-letter code: Alpha-latrotoxin-Lh1a (1351 aa).

Positions 1 to 7 are cleaved as a signal peptide; that stretch reads SLVRMRR. Positions 4-7 are furin-like endopeptidase recognition region; the sequence is RMRR. Positions 226–245 are helix H8 is the probable transmembrane region of the tetrameric pore inserted in the target cell membrane; sequence VLYALLYGTQTYVSVMFFLL. The cysteines at positions 401 and 1054 are disulfide-linked. ANK repeat units lie at residues 446 to 477, 478 to 509, 513 to 542, 547 to 577, 581 to 610, 614 to 644, 648 to 678, 683 to 711, 717 to 746, 750 to 779, 783 to 812, 816 to 846, 850 to 879, 883 to 912, 916 to 945, 959 to 991, 992 to 1019, 1023 to 1052, 1056 to 1085, 1089 to 1119, 1125 to 1154, and 1158 to 1187; these read LYNT…ATFE, QGRT…ELNQ, KGYT…SINS, FLQT…NINE, DGFT…DLNA, KGLT…DVNA, NNMT…NADV, GLLS…NVNV, GGIT…NIEQ, EKYT…NFEA, SGAT…NWRD, NGQM…VLDI, NSDT…DINT, TGHA…NVYI, DGIN…KFEW, EECA…GNFA, ICGP…DLNV, KPDT…KVNH, NGMT…DFRR, LGAT…DIDI, DKET…DMTI, and YDKT…KFRR. The segment at 1184–1187 is furin-like endopeptidase recognition region; it reads KFRR. The propeptide occupies 1188–1351; sequence EYKSSYGEHS…LGSVIMNSHS (164 aa).

The protein belongs to the cationic peptide 01 (latrotoxin) family. 03 (alpha-latrotoxin) subfamily. As to quaternary structure, homotetramer in membranes. Post-translationally, processed by furin-like proteases at both the N- and C-termini. In terms of tissue distribution, expressed in venom gland, cephalothorax, and abdomen tissues from both males and females.

It is found in the secreted. The protein resides in the target cell membrane. Presynaptic neurotoxin that causes massive release of neurotransmitters from vertebrate (but not invertebrate) nerve terminals and endocrine cells via a complex mechanism involving activation of receptor(s) and toxin insertion into the plasma membrane with subsequent pore formation. Binds to neurexin-1-alpha (NRXN1) in a calcium dependent manner, adhesion G protein-coupled receptor L1 (ADGRL1, also termed latrophilin-1 and calcium-independent receptor of latrotoxin (CIRL)), and receptor-type tyrosine-protein phosphatase S (PTPRS), also termed PTP sigma. NRXN1 and PTPRS are suggested to provide a platform for binding and subsequent pore formation events. In contrast, binding to ADGRL1 does not involve oligomerization and channel formation, but direct downstream stimulation of the synaptic fusion machinery. Induces rapid muscle contracture and loss of twitch tension when added to the isolated and indirectly stimulated chick biventer cervicis nerve-muscle preparation. The polypeptide is Alpha-latrotoxin-Lh1a (Latrodectus hasselti (Redback spider)).